A 372-amino-acid polypeptide reads, in one-letter code: Integral membrane protein GPR137B (372 aa).

Residues methionine 1–threonine 32 lie on the Lumenal side of the membrane. Residue asparagine 11 is glycosylated (N-linked (GlcNAc...) asparagine). A helical transmembrane segment spans residues valine 33 to leucine 53. Residues histidine 54–threonine 64 are Cytoplasmic-facing. The helical transmembrane segment at valine 65–phenylalanine 85 threads the bilayer. Topologically, residues arginine 86–arginine 93 are lumenal. A helical transmembrane segment spans residues leucine 94–leucine 114. Topologically, residues threonine 115–tyrosine 144 are cytoplasmic. A helical transmembrane segment spans residues leucine 145–valine 165. Topologically, residues lysine 166–lysine 173 are lumenal. The chain crosses the membrane as a helical span at residues valine 174 to leucine 194. Over serine 195–threonine 222 the chain is Cytoplasmic. The helical transmembrane segment at cysteine 223 to leucine 243 threads the bilayer. The Lumenal segment spans residues serine 244–valine 276. An N-linked (GlcNAc...) asparagine glycan is attached at asparagine 259. The helical transmembrane segment at valine 277–phenylalanine 297 threads the bilayer. At arginine 298–threonine 372 the chain is on the cytoplasmic side.

It belongs to the GPR137 family.

Its subcellular location is the lysosome membrane. Functionally, lysosomal integral membrane protein that regulates the localization and activity of mTORC1, a signaling complex promoting cell growth in response to growth factors, energy levels, and amino acids. Interacts with Rag GTPases and increases the lysosomial localization and activity of Rag GTPases and thereby regulates mTORC1 translocation and activity in lysosome. Involved in the regulation of lysosomal morphology and autophagy. Also acts as a negative regulator of osteoclast activity. In terms of biological role, also acts as a negative regulator of osteoclast activity. The protein is Integral membrane protein GPR137B (gpr137b) of Xenopus laevis (African clawed frog).